A 124-amino-acid chain; its full sequence is MAPVTSKKSKSVKKFVVDVAAPVENDVFDQESYVKYLVEHVKVDGIVGNLGNDISITAESDNKVVVVVSGNGSFSGKYLKYLTKKYLKKNQIRDWIRFVSVKQNQYKLQFYAVAEDDEEEEDEE.

The protein belongs to the eukaryotic ribosomal protein eL22 family. Component of the large ribosomal subunit. Mature ribosomes consist of a small (40S) and a large (60S) subunit. The 40S subunit contains about 32 different proteins and 1 molecule of RNA (18S). The 60S subunit contains 45 different proteins and 3 molecules of RNA (25S, 5.8S and 5S).

The protein resides in the cytoplasm. In terms of biological role, component of the ribosome, a large ribonucleoprotein complex responsible for the synthesis of proteins in the cell. The small ribosomal subunit (SSU) binds messenger RNAs (mRNAs) and translates the encoded message by selecting cognate aminoacyl-transfer RNA (tRNA) molecules. The large subunit (LSU) contains the ribosomal catalytic site termed the peptidyl transferase center (PTC), which catalyzes the formation of peptide bonds, thereby polymerizing the amino acids delivered by tRNAs into a polypeptide chain. The nascent polypeptides leave the ribosome through a tunnel in the LSU and interact with protein factors that function in enzymatic processing, targeting, and the membrane insertion of nascent chains at the exit of the ribosomal tunnel. The polypeptide is Large ribosomal subunit protein eL22 (Candida albicans (strain SC5314 / ATCC MYA-2876) (Yeast)).